Here is a 297-residue protein sequence, read N- to C-terminus: Homoserine kinase (297 aa).

79–89 (PIARGLGSSGA) is a binding site for ATP.

Belongs to the GHMP kinase family. Homoserine kinase subfamily.

It localises to the cytoplasm. It carries out the reaction L-homoserine + ATP = O-phospho-L-homoserine + ADP + H(+). It functions in the pathway amino-acid biosynthesis; L-threonine biosynthesis; L-threonine from L-aspartate: step 4/5. Its function is as follows. Catalyzes the ATP-dependent phosphorylation of L-homoserine to L-homoserine phosphate. The polypeptide is Homoserine kinase (Pyrobaculum neutrophilum (strain DSM 2338 / JCM 9278 / NBRC 100436 / V24Sta) (Thermoproteus neutrophilus)).